A 110-amino-acid polypeptide reads, in one-letter code: NADH-quinone oxidoreductase subunit K (110 aa).

3 helical membrane-spanning segments follow: residues 13–33 (LNHY…GLFM), 41–61 (ILMS…AFSV), and 73–93 (IIIL…LLIY).

The protein belongs to the complex I subunit 4L family. In terms of assembly, NDH-1 is composed of 14 different subunits. Subunits NuoA, H, J, K, L, M, N constitute the membrane sector of the complex.

The protein resides in the cell inner membrane. The catalysed reaction is a quinone + NADH + 5 H(+)(in) = a quinol + NAD(+) + 4 H(+)(out). NDH-1 shuttles electrons from NADH, via FMN and iron-sulfur (Fe-S) centers, to quinones in the respiratory chain. The immediate electron acceptor for the enzyme in this species is believed to be ubiquinone. Couples the redox reaction to proton translocation (for every two electrons transferred, four hydrogen ions are translocated across the cytoplasmic membrane), and thus conserves the redox energy in a proton gradient. In Rickettsia prowazekii (strain Madrid E), this protein is NADH-quinone oxidoreductase subunit K.